We begin with the raw amino-acid sequence, 551 residues long: Cysteine desulfurase SufS (551 aa).

Residues 1 to 22 form the signal peptide; sequence MRPSSAAWICLLLRIANYTCYS. Lys-327 carries the post-translational modification N6-(pyridoxal phosphate)lysine. Catalysis depends on Cys-500, which acts as the Cysteine persulfide intermediate.

The protein belongs to the class-V pyridoxal-phosphate-dependent aminotransferase family. Csd subfamily. In terms of assembly, monomer. Interacts with SufE; interaction enhances cysteine desulfurase activity of SufS. It depends on pyridoxal 5'-phosphate as a cofactor.

It is found in the plastid. The protein localises to the apicoplast. The catalysed reaction is (sulfur carrier)-H + L-cysteine = (sulfur carrier)-SH + L-alanine. It functions in the pathway cofactor biosynthesis; iron-sulfur cluster biosynthesis. In terms of biological role, catalyzes sulfur activation and mobilization in sulfur mobilization (SUF) pathway for iron-sulfur (Fe-S) cluster biogenesis. Active when in complex with a partner protein SufE. Required for apicoplast maintenance. Plays a role in the development of sporozoites in oocysts in mosquitoes. The sequence is that of Cysteine desulfurase SufS from Plasmodium vivax.